The following is a 107-amino-acid chain: U1-lycotoxin-Ls1w (107 aa).

An N-terminal signal peptide occupies residues 1–20 (MLKVLVVVALLVTLISYSSS). A propeptide spanning residues 21–41 (EGIDDLEADELLSLMANEQTR) is cleaved from the precursor. Cystine bridges form between C44/C59, C51/C68, C58/C86, and C70/C84.

The protein belongs to the neurotoxin 19 (CSTX) family. 04 (U1-Lctx) subfamily. As to expression, expressed by the venom gland.

The protein resides in the secreted. This chain is U1-lycotoxin-Ls1w, found in Lycosa singoriensis (Wolf spider).